The chain runs to 247 residues: Carboxy-S-adenosyl-L-methionine synthase (247 aa).

Residues Tyr-39, 64-66 (GCS), 89-90 (DN), 117-118 (DI), Asn-132, and Arg-199 each bind S-adenosyl-L-methionine.

This sequence belongs to the class I-like SAM-binding methyltransferase superfamily. Cx-SAM synthase family. As to quaternary structure, homodimer.

It catalyses the reaction prephenate + S-adenosyl-L-methionine = carboxy-S-adenosyl-L-methionine + 3-phenylpyruvate + H2O. Its function is as follows. Catalyzes the conversion of S-adenosyl-L-methionine (SAM) to carboxy-S-adenosyl-L-methionine (Cx-SAM). The chain is Carboxy-S-adenosyl-L-methionine synthase from Escherichia coli O17:K52:H18 (strain UMN026 / ExPEC).